A 329-amino-acid chain; its full sequence is Prostaglandin reductase 1 (329 aa).

Position 18 is a phosphothreonine (Thr-18). At Ser-20 the chain carries Phosphoserine. NADP(+)-binding positions include 152 to 155, Lys-178, Tyr-193, Asn-217, 239 to 245, 270 to 272, and Asn-321; these read GAVG, CGAISTY, and FIV. An N6-(2-hydroxyisobutyryl)lysine; alternate modification is found at Lys-178. At Lys-178 the chain carries N6-acetyllysine; alternate.

This sequence belongs to the NADP-dependent oxidoreductase L4BD family. As to quaternary structure, monomer or homodimer. Ubiquitously distributed in various tissues and leukocytes, the kidney and liver had the highest enzyme activities.

The protein resides in the cytoplasm. The enzyme catalyses 13,14-dihydro-15-oxo-prostaglandin E1 + NADP(+) = 15-oxoprostaglandin E1 + NADPH + H(+). The catalysed reaction is 13,14-dihydro-15-oxo-prostaglandin E2 + NADP(+) = 15-oxoprostaglandin E2 + NADPH + H(+). It carries out the reaction 13,14-dihydro-15-oxo-prostaglandin E2 + NAD(+) = 15-oxoprostaglandin E2 + NADH + H(+). It catalyses the reaction 13,14-dihydro-15-oxo-prostaglandin F1alpha + NADP(+) = 15-oxoprostaglandin F1alpha + NADPH + H(+). The enzyme catalyses 13,14-dihydro-15-oxo-PGF2alpha + NADP(+) = 15-oxoprostaglandin F2alpha + NADPH + H(+). The catalysed reaction is leukotriene B4 + NADP(+) = 12-oxo-leukotriene B4 + NADPH + H(+). It carries out the reaction 20-hydroxy-leukotriene B4 + NADP(+) = 12-oxo-20-hydroxy-leukotriene B4 + NADPH + H(+). It catalyses the reaction 6-trans-leukotriene B4 + NADP(+) = 12-oxo-(5S)-hydroxy-(6E,8E,10E,14Z)-eicosatetraenoate + NADPH + H(+). The enzyme catalyses (5S,12S)-dihydroxy-(6E,10E,12E,14Z)-eicosatetraenoate + NADP(+) = 12-oxo-(5S)-hydroxy-(6E,8E,10E,14Z)-eicosatetraenoate + NADPH + H(+). The catalysed reaction is 15-oxo-(5S,6R)-dihydroxy-(7E,9E,11Z,13E)-eicosatetraenoate + NADH + H(+) = 15-oxo-(5S,6R)-dihydroxy-(7E,9E,11Z)-eicosatrienoate + NAD(+). It carries out the reaction an n-alkanal + NADP(+) = an alk-2-enal + NADPH + H(+). It catalyses the reaction hexanal + NADP(+) = (E)-hex-2-enal + NADPH + H(+). The enzyme catalyses octanal + NADP(+) = (2E)-octenal + NADPH + H(+). The catalysed reaction is decanal + NADP(+) = (2E)-decenal + NADPH + H(+). It carries out the reaction dodecanal + NADP(+) = (2E)-dodecenal + NADPH + H(+). It catalyses the reaction 4-hydroxynonanal + NADP(+) = (E)-4-hydroxynon-2-enal + NADPH + H(+). The enzyme catalyses pentan-2-one + NADP(+) = (E)-pent-3-en-2-one + NADPH + H(+). The catalysed reaction is nonan-2-one + NADP(+) = (3E)-nonen-2-one + NADPH + H(+). With respect to regulation, down-regulated by nonsteroidal anti-inflammatory drugs diclofenac, indomethacin and niflumic acid. In terms of biological role, NAD(P)H-dependent oxidoreductase involved in metabolic inactivation of pro- and anti-inflammatory eicosanoids: prostaglandins (PG), leukotrienes (LT) and lipoxins (LX). Preferentially uses NADPH over NADH as cofactor. Catalyzes with high efficiency the reduction of the 13,14 double bond of 15-oxoPGs, including 15-oxo-PGE1, 15-oxo-PGE2, 15-oxo-PGF1-alpha and 15-oxo-PGF2-alpha. Catalyzes with lower efficiency the oxidation of the hydroxyl group at C12 of LTB4 and its derivatives, converting them into biologically less active 12-oxo-LTB4 metabolites. Reduces 15-oxo-LXA4 to 13,14 dihydro-15-oxo-LXA4 and may promote neutrophil recruitment at the inflammatory site. Plays a role in metabolic detoxification of alkenals and ketones. Reduces alpha,beta-unsaturated alkenals and ketones, particularly those with medium-chain length, showing highest affinity toward (2E)-decenal and (3E)-3-nonen-2-one. May inactivate 4-hydroxy-2-nonenal, a cytotoxic lipid constituent of oxidized low-density lipoprotein particles. The polypeptide is Prostaglandin reductase 1 (PTGR1) (Sus scrofa (Pig)).